The sequence spans 4639 residues: Dynein heavy chain, cytoplasmic (4639 aa).

Positions 1–1856 (MGDSLENPDT…TIHMANARFF (1856 aa)) are stem. Coiled-coil stretches lie at residues 530 to 565 (LDIT…LRDQ), 774 to 794 (SLIE…DRAS), and 1264 to 1368 (DDAL…ARLR). 4 AAA regions span residues 1857-2084 (YGFE…VLIS), 2166-2437 (EEIR…FTRL), 2541-2790 (EVET…WVRG), and 2884-3153 (VFYE…GGRT). ATP is bound by residues 1895-1902 (GPAGTGKT), 2210-2217 (GPSGSGKS), 2580-2587 (GPPGSGKT), and 2922-2929 (GVSGAGKT). 3 coiled-coil regions span residues 3189-3261 (GLNK…EKRK), 3382-3478 (AIAQ…WEST), and 3723-3782 (EFRL…EIET). The interval 3189–3478 (GLNKIAETVE…NIERERWEST (290 aa)) is stalk. AAA regions lie at residues 3539–3768 (LSNP…DINQ) and 3989–4205 (AHNV…TLDT).

It belongs to the dynein heavy chain family. In terms of assembly, consists of at least two heavy chains and a number of intermediate and light chains.

The protein resides in the cytoplasm. The protein localises to the cytoskeleton. Its function is as follows. Cytoplasmic dynein acts as a motor for the intracellular retrograde motility of vesicles and organelles along microtubules. Dynein has ATPase activity; the force-producing power stroke is thought to occur on release of ADP. The chain is Dynein heavy chain, cytoplasmic (Dhc64C) from Drosophila melanogaster (Fruit fly).